The following is a 565-amino-acid chain: uncharacterized protein (565 aa).

This is an uncharacterized protein from Acanthamoeba polyphaga mimivirus (APMV).